A 1925-amino-acid polypeptide reads, in one-letter code: Cilia- and flagella-associated protein 65 (1925 aa).

Residues 188–208 (FFTVIPQPIFLSPGITLTLPI) form a helical membrane-spanning segment. The region spanning 877–986 (QLKLDTHKSL…THYMLRLVGV (110 aa)) is the MSP domain. The stretch at 1525–1550 (SQQLMRQYHKELQEWKDEKVRQEVEF) forms a coiled coil. 2 disordered regions span residues 1645–1667 (KRKAPREESETSEEKSPNKWGPV) and 1736–1823 (SSWE…PESQ). 2 stretches are compositionally biased toward basic and acidic residues: residues 1649-1661 (PREESETSEEKSP) and 1739-1762 (EDGKGKQPKEDRPEHYPGLGKKEE). Positions 1763-1804 (GEEEKGEEEEEELEEEEEEEEETEEEELGKEEIEEKEEERDE) are enriched in acidic residues.

This sequence belongs to the CFAP65 family. As to quaternary structure, interacts with CFAP47.

Its subcellular location is the cell projection. The protein localises to the cilium. The protein resides in the flagellum membrane. It is found in the cytoplasmic vesicle. It localises to the secretory vesicle. Its subcellular location is the acrosome membrane. The protein localises to the cytoplasm. In terms of biological role, plays a role in flagellar formation and sperm motility. The chain is Cilia- and flagella-associated protein 65 from Homo sapiens (Human).